A 378-amino-acid polypeptide reads, in one-letter code: Ribosomal RNA large subunit methyltransferase G (378 aa).

This sequence belongs to the methyltransferase superfamily. RlmG family.

Its subcellular location is the cytoplasm. It carries out the reaction guanosine(1835) in 23S rRNA + S-adenosyl-L-methionine = N(2)-methylguanosine(1835) in 23S rRNA + S-adenosyl-L-homocysteine + H(+). In terms of biological role, specifically methylates the guanine in position 1835 (m2G1835) of 23S rRNA. The polypeptide is Ribosomal RNA large subunit methyltransferase G (Enterobacter sp. (strain 638)).